A 600-amino-acid chain; its full sequence is DNA polymerase alpha subunit B (600 aa).

Residues 107–165 (ETLLSSYTTPSKGPLKRVSSTPETPLTKRSVAARSPRQLLSPSSFSPSATPSQKYTSRT) are disordered. Serine 126 carries the post-translational modification Phosphoserine. Threonine 127 and threonine 130 each carry phosphothreonine. Residues 139 to 159 (ARSPRQLLSPSSFSPSATPSQ) show a composition bias toward low complexity. A phosphoserine mark is found at serine 141, serine 147, serine 152, and serine 154.

This sequence belongs to the DNA polymerase alpha subunit B family. In terms of assembly, component of the alpha DNA polymerase complex (also known as the alpha DNA polymerase-primase complex) consisting of four subunits: the catalytic subunit POLA1, the regulatory subunit POLA2, and the primase complex subunits PRIM1 and PRIM2 respectively. Within the complex, POLA1 directly interacts with PRIM2. In terms of processing, phosphorylated in a cell cycle-dependent manner, in G2/M phase.

The protein resides in the nucleus. Accessory subunit of the DNA polymerase alpha complex (also known as the alpha DNA polymerase-primase complex) which plays an essential role in the initiation of DNA synthesis. During the S phase of the cell cycle, the DNA polymerase alpha complex (composed of a catalytic subunit POLA1, an accessory subunit POLA2 and two primase subunits, the catalytic subunit PRIM1 and the regulatory subunit PRIM2) is recruited to DNA at the replicative forks via direct interactions with MCM10 and WDHD1. The primase subunit of the polymerase alpha complex initiates DNA synthesis by oligomerising short RNA primers on both leading and lagging strands. These primers are initially extended by the polymerase alpha catalytic subunit and subsequently transferred to polymerase delta and polymerase epsilon for processive synthesis on the lagging and leading strand, respectively. The protein is DNA polymerase alpha subunit B (Pola2) of Mus musculus (Mouse).